The following is a 104-amino-acid chain: Large ribosomal subunit protein uL24 (104 aa).

The protein belongs to the universal ribosomal protein uL24 family. In terms of assembly, part of the 50S ribosomal subunit.

Functionally, one of two assembly initiator proteins, it binds directly to the 5'-end of the 23S rRNA, where it nucleates assembly of the 50S subunit. Its function is as follows. One of the proteins that surrounds the polypeptide exit tunnel on the outside of the subunit. The chain is Large ribosomal subunit protein uL24 from Pectobacterium carotovorum subsp. carotovorum (strain PC1).